A 505-amino-acid polypeptide reads, in one-letter code: Actin nucleation-promoting factor WASL (505 aa).

Position 2 is an N-acetylserine (S2). The 108-residue stretch at 34 to 141 folds into the WH1 domain; sequence LGKKCVTMSS…KAVTDLLGRR (108 aa). 2 disordered regions span residues 138-163 and 185-205; these read LGRR…ATVD and TKEK…DIGT. Residues 186 to 198 show a composition bias toward basic residues; sequence KEKKKGKAKKKRL. One can recognise a CRIB domain in the interval 203–216; that stretch reads IGTPSNFQHIGHVG. Phosphoserine; by TNK2 is present on S242. The residue at position 256 (Y256) is a Phosphotyrosine; by FAK1 and TNK2. Disordered stretches follow at residues 266–406, 449–468, and 477–505; these read EAVK…AGSK, SVTD…SGIV, and KRSK…EWED. Pro residues-rich tracts occupy residues 276 to 349, 356 to 365, and 372 to 391; these read APPP…PLPA, SGPPPPPPPL, and APPP…PPGL. R307 bears the Omega-N-methylarginine mark. WH2 domains are found at residues 405–422 and 433–450; these read SKAA…LKKV and GRDA…LKSV. 2 positions are modified to phosphoserine: S484 and S485. Over residues 486–505 the composition is skewed to acidic residues; sequence DEDEDEDDDEDFEDDDEWED.

In terms of assembly, binds actin and the Arp2/3 complex. Interacts with CDC42. Interacts with FCHSD1. Interacts with FCHSD2. Binds to SH3 domains of GRB2. Interacts with the C-terminal SH3 domain of DNMBP. Interacts with SNX9. Interacts with the WW domains of PRPF40A/FBP11. Interacts with PTK2/FAK1. Interacts with PACSIN1, PACSIN2 and PACSIN3. Interacts with NOSTRIN. Binds to TNK2. Interacts with SNX33. Interacts with NONO (via second RRM domain); the interaction is direct. Component of a multiprotein complex with NONO and SFPQ; associates with the complex via direct interaction with NONO. Post-translationally, phosphorylation at Ser-242, Tyr-256, Ser-484 and Ser-485 enhances actin polymerization activity.

It is found in the cytoplasm. It localises to the cytoskeleton. The protein resides in the nucleus. In terms of biological role, regulates actin polymerization by stimulating the actin-nucleating activity of the Arp2/3 complex. Involved in various processes, such as mitosis and cytokinesis, via its role in the regulation of actin polymerization. Together with CDC42, involved in the extension and maintenance of the formation of thin, actin-rich surface projections called filopodia. In addition to its role in the cytoplasm, also plays a role in the nucleus by regulating gene transcription, probably by promoting nuclear actin polymerization. Binds to HSF1/HSTF1 and forms a complex on heat shock promoter elements (HSE) that negatively regulates HSP90 expression. Plays a role in dendrite spine morphogenesis. In Bos taurus (Bovine), this protein is Actin nucleation-promoting factor WASL (WASL).